The sequence spans 335 residues: Holliday junction branch migration complex subunit RuvB (335 aa).

A large ATPase domain (RuvB-L) region spans residues 4-184 (ADRLIDATEK…FGIVQRLEFY (181 aa)). ATP is bound by residues isoleucine 23, arginine 24, glycine 65, lysine 68, threonine 69, threonine 70, 131–133 (EDY), arginine 174, tyrosine 184, and arginine 221. Position 69 (threonine 69) interacts with Mg(2+). The small ATPAse domain (RuvB-S) stretch occupies residues 185 to 255 (SVEDLSYIVG…VAELALNMID (71 aa)). Residues 258–335 (KSGFDYMDRK…HHFGLLPKQD (78 aa)) form a head domain (RuvB-H) region. Positions 313 and 318 each coordinate DNA.

This sequence belongs to the RuvB family. In terms of assembly, homohexamer. Forms an RuvA(8)-RuvB(12)-Holliday junction (HJ) complex. HJ DNA is sandwiched between 2 RuvA tetramers; dsDNA enters through RuvA and exits via RuvB. An RuvB hexamer assembles on each DNA strand where it exits the tetramer. Each RuvB hexamer is contacted by two RuvA subunits (via domain III) on 2 adjacent RuvB subunits; this complex drives branch migration. In the full resolvosome a probable DNA-RuvA(4)-RuvB(12)-RuvC(2) complex forms which resolves the HJ.

Its subcellular location is the cytoplasm. It catalyses the reaction ATP + H2O = ADP + phosphate + H(+). Its function is as follows. The RuvA-RuvB-RuvC complex processes Holliday junction (HJ) DNA during genetic recombination and DNA repair, while the RuvA-RuvB complex plays an important role in the rescue of blocked DNA replication forks via replication fork reversal (RFR). RuvA specifically binds to HJ cruciform DNA, conferring on it an open structure. The RuvB hexamer acts as an ATP-dependent pump, pulling dsDNA into and through the RuvAB complex. RuvB forms 2 homohexamers on either side of HJ DNA bound by 1 or 2 RuvA tetramers; 4 subunits per hexamer contact DNA at a time. Coordinated motions by a converter formed by DNA-disengaged RuvB subunits stimulates ATP hydrolysis and nucleotide exchange. Immobilization of the converter enables RuvB to convert the ATP-contained energy into a lever motion, pulling 2 nucleotides of DNA out of the RuvA tetramer per ATP hydrolyzed, thus driving DNA branch migration. The RuvB motors rotate together with the DNA substrate, which together with the progressing nucleotide cycle form the mechanistic basis for DNA recombination by continuous HJ branch migration. Branch migration allows RuvC to scan DNA until it finds its consensus sequence, where it cleaves and resolves cruciform DNA. The polypeptide is Holliday junction branch migration complex subunit RuvB (Pseudoalteromonas translucida (strain TAC 125)).